Here is a 355-residue protein sequence, read N- to C-terminus: UDP-3-O-acylglucosamine N-acyltransferase (355 aa).

H248 serves as the catalytic Proton acceptor.

This sequence belongs to the transferase hexapeptide repeat family. LpxD subfamily. In terms of assembly, homotrimer.

The enzyme catalyses a UDP-3-O-[(3R)-3-hydroxyacyl]-alpha-D-glucosamine + a (3R)-hydroxyacyl-[ACP] = a UDP-2-N,3-O-bis[(3R)-3-hydroxyacyl]-alpha-D-glucosamine + holo-[ACP] + H(+). It functions in the pathway bacterial outer membrane biogenesis; LPS lipid A biosynthesis. Catalyzes the N-acylation of UDP-3-O-acylglucosamine using 3-hydroxyacyl-ACP as the acyl donor. Is involved in the biosynthesis of lipid A, a phosphorylated glycolipid that anchors the lipopolysaccharide to the outer membrane of the cell. This is UDP-3-O-acylglucosamine N-acyltransferase from Synechococcus elongatus (strain ATCC 33912 / PCC 7942 / FACHB-805) (Anacystis nidulans R2).